The sequence spans 445 residues: MALVDKHKVKRQRLDRICEGIRPQIMNGPLHPRPLVALLDGRDCTVEMPILKDLATVAFCDAQSTQEIHEKVLNEAVGAMMYHTITLTREDLEKFKALRVIVRIGSGYDNVDIKAAGELGIAVCNIPSAAVEETADSTICHILNLYRRNTWLYQALREGTRVQSVEQIREVASGAARIRGETLGLIGFGRTGQAVAVRAKAFGFSVLFYDPYLQDGTERSLGVQRVYTLQDLLYQSDCVSLHCNLNEHNHHLINDFTIKQMRQGAFLVNAARGGLVDEKALAQALKEGRIRGAALDVHESEPFSFAQGPLKDAPNLICTPHTAWYSEQASLEMREAAATEIRRAITGRIPESLRNCVNKEFFVTTAPWSVIDQQAIHPELNGATYRYPPGIVGVAPGGLPAAMEGIIPGGIPVTHNLPTVAHPSQAPSPNQPTKHGDNREHPNEQ.

R22 is subject to Asymmetric dimethylarginine. Residues S106, 186 to 191 (IGFGRT), D210, 243 to 249 (CNLNEHN), 270 to 272 (AAR), and D296 each bind NAD(+). R272 is a catalytic residue. E301 is an active-site residue. The active-site Proton donor is the H321. 321 to 324 (HTAW) provides a ligand contact to NAD(+). A disordered region spans residues 414–445 (THNLPTVAHPSQAPSPNQPTKHGDNREHPNEQ). Residue S428 is modified to Phosphoserine. The span at 434–445 (KHGDNREHPNEQ) shows a compositional bias: basic and acidic residues.

This sequence belongs to the D-isomer specific 2-hydroxyacid dehydrogenase family. Interacts with the C-terminus of adenovirus E1A protein. Can form homodimers or heterodimers of CTBP1 and CTBP2. Interacts with HIPK2. Interacts with ZNF217, PNN, NRIP1 and WIZ. Interacts with PRDM16; represses white adipose tissue (WAT)-specific genes expression. Interacts with MCRIP1. As to expression, isoform 2 is specifically localized in synaptic ribbon (at protein level).

The protein localises to the nucleus. It is found in the synapse. Functionally, corepressor targeting diverse transcription regulators. Functions in brown adipose tissue (BAT) differentiation. Isoform 2 probably acts as a scaffold for specialized synapses. The sequence is that of C-terminal-binding protein 2 (CTBP2) from Bos taurus (Bovine).